Consider the following 582-residue polypeptide: Heterogeneous nuclear ribonucleoprotein C homolog (582 aa).

The interval 1–21 is disordered; the sequence is MSEALETGDPSPPPPIVSENG. C2H2-type zinc fingers lie at residues 102–125, 130–154, and 213–235; these read YYCC…RGYH, SSCD…RRTH, and YACL…VEMH.

It localises to the nucleus. This Caenorhabditis elegans protein is Heterogeneous nuclear ribonucleoprotein C homolog.